The primary structure comprises 389 residues: Type 2 DNA topoisomerase 6 subunit A (389 aa).

Residues 12–162 (EARRKAANIL…MLILSKEKGK (151 aa)) form the Topo IIA-type catalytic domain. The active-site O-(5'-phospho-DNA)-tyrosine intermediate is Tyr106. Positions 209 and 261 each coordinate Mg(2+).

The protein belongs to the TOP6A family. As to quaternary structure, homodimer. Heterotetramer of two Top6A and two Top6B chains. Requires Mg(2+) as cofactor.

The enzyme catalyses ATP-dependent breakage, passage and rejoining of double-stranded DNA.. Its activity is regulated as follows. Not inhibited by the DNA gyrase inhibitor novobiocin, instead inhibited by eukaryotic topoisomerase inhibitors such as m- and o-amsacrine, ellipticine, and the quinolone CP-115,953. In terms of biological role, relaxes both positive and negative supercoils and exhibits a strong decatenase and unknotting activity; it cannot introduce DNA supercoils. ATP is absolutely required for DNA cleavage; the nonhydrolyzable analog AMP-PNP generates nicked or linear products from a supercoiled dsDNA substrate. Generates staggered two-nucleotide long 5' overhangs. The enzyme is covalently attached transiently to the 5'-ends of the cleaved strands. This Saccharolobus shibatae (strain ATCC 51178 / DSM 5389 / JCM 8931 / NBRC 15437 / B12) (Sulfolobus shibatae) protein is Type 2 DNA topoisomerase 6 subunit A.